Consider the following 226-residue polypeptide: Transmembrane 4 L6 family member 20 (226 aa).

The Lumenal segment spans residues 1–14 (MTCCEGWTSCNGFS). The helical transmembrane segment at 15–35 (LLILILLGVVINCIPLGISLV) threads the bilayer. Over 36-49 (EADSTSQNPISCYE) the chain is Cytoplasmic. Residues 50 to 70 (WWFPGIIGAGLMAIPATTMSL) traverse the membrane as a helical segment. The Lumenal portion of the chain corresponds to 71-83 (AARKRACCNNKTG). Residues 84-104 (MFLSSLFSVITVVGAVYCMLV) traverse the membrane as a helical segment. At 105-191 (SLQALLEGPL…RIFHFSVFMS (87 aa)) the chain is on the cytoplasmic side. A helical transmembrane segment spans residues 192–212 (LLLVGILELLFGLSQILIGFL). The Lumenal segment spans residues 213–226 (GCLCGVSQRRSQIV).

The protein belongs to the L6 tetraspanin family. In terms of processing, glycosylated at Asn-132, Asn-148 and Asn-163 in presence of ceramide which inverts the orientation of TM4SF20 in membranes exposing these residues to the endoplasmic reticulum lumen. Cleaved by signal peptidase at Ser-14 but the peptide does not act as a signal peptide. Cleavage is inhibited by ceramide which inverts the orientation of TM4SF20 in membranes exposing the N-terminus to the cytosol and not to the endoplasmic reticulum lumen.

Its subcellular location is the membrane. The protein localises to the endoplasmic reticulum membrane. Polytopic transmembrane protein. Inhibits regulated intramembrane proteolysis (RIP) of CREB3L1, inhibiting its activation and the induction of collagen synthesis. In response to ceramide, which alters TM4SF20 membrane topology, stimulates RIP activation of CREB3L1. Ceramide reverses the direction through which transmembrane helices are translocated into the endoplasmic reticulum membrane during translation of TM4SF20, this mechanism is called 'regulated alternative translocation' (RAT) and regulates the function of the transmembrane protein. This Mus musculus (Mouse) protein is Transmembrane 4 L6 family member 20 (Tm4sf20).